The following is a 415-amino-acid chain: Serine hydroxymethyltransferase (415 aa).

Residues L117 and 121-123 contribute to the (6S)-5,6,7,8-tetrahydrofolate site; that span reads GHL. K226 is subject to N6-(pyridoxal phosphate)lysine.

It belongs to the SHMT family. Homodimer. Pyridoxal 5'-phosphate serves as cofactor.

The protein resides in the cytoplasm. The catalysed reaction is (6R)-5,10-methylene-5,6,7,8-tetrahydrofolate + glycine + H2O = (6S)-5,6,7,8-tetrahydrofolate + L-serine. It participates in one-carbon metabolism; tetrahydrofolate interconversion. It functions in the pathway amino-acid biosynthesis; glycine biosynthesis; glycine from L-serine: step 1/1. Functionally, catalyzes the reversible interconversion of serine and glycine with tetrahydrofolate (THF) serving as the one-carbon carrier. This reaction serves as the major source of one-carbon groups required for the biosynthesis of purines, thymidylate, methionine, and other important biomolecules. Also exhibits THF-independent aldolase activity toward beta-hydroxyamino acids, producing glycine and aldehydes, via a retro-aldol mechanism. The protein is Serine hydroxymethyltransferase of Dehalococcoides mccartyi (strain ATCC BAA-2266 / KCTC 15142 / 195) (Dehalococcoides ethenogenes (strain 195)).